The sequence spans 141 residues: Cystatin (141 aa).

The signal sequence occupies residues 1-26; it reads MVHSQLPVAAPLRLLCALLLLPSATM. One can recognise a Cystatin domain in the interval 29-129; it reads GGISPRSVTD…CHFQVWSRPW (101 aa). Positions 73–77 match the Secondary area of contact motif; it reads QVVAG. Cystine bridges form between Cys91-Cys107 and Cys120-Cys140.

Belongs to the cystatin family. In terms of tissue distribution, expressed by the venom gland at an extremely low level (at protein level).

The protein localises to the secreted. Functionally, inhibits various C1 cysteine proteases including cathepsin L, papain and cathepsin B. This protein has no toxic activity and its function in the venom is unknown. It may play a role as a housekeeping or regulatory protein. In Oxyuranus microlepidotus (Inland taipan), this protein is Cystatin.